The sequence spans 72 residues: Translation initiation factor IF-1 (72 aa).

In terms of domain architecture, S1-like spans 1–72 (MAKEDTLEFP…SKGRINYRFK (72 aa)).

It belongs to the IF-1 family. In terms of assembly, component of the 30S ribosomal translation pre-initiation complex which assembles on the 30S ribosome in the order IF-2 and IF-3, IF-1 and N-formylmethionyl-tRNA(fMet); mRNA recruitment can occur at any time during PIC assembly.

Its subcellular location is the cytoplasm. One of the essential components for the initiation of protein synthesis. Stabilizes the binding of IF-2 and IF-3 on the 30S subunit to which N-formylmethionyl-tRNA(fMet) subsequently binds. Helps modulate mRNA selection, yielding the 30S pre-initiation complex (PIC). Upon addition of the 50S ribosomal subunit IF-1, IF-2 and IF-3 are released leaving the mature 70S translation initiation complex. This chain is Translation initiation factor IF-1, found in Cereibacter sphaeroides (strain ATCC 17029 / ATH 2.4.9) (Rhodobacter sphaeroides).